Reading from the N-terminus, the 144-residue chain is Large ribosomal subunit protein uL15 (144 aa).

The interval 1–48 is disordered; it reads MIKLESLQDPSPRKRRTKLLGRGPSSGHGKTSCRGHKGDGSRSGYKRR.

This sequence belongs to the universal ribosomal protein uL15 family. As to quaternary structure, part of the 50S ribosomal subunit.

Functionally, binds to the 23S rRNA. The sequence is that of Large ribosomal subunit protein uL15 from Chlamydia abortus (strain DSM 27085 / S26/3) (Chlamydophila abortus).